Here is a 234-residue protein sequence, read N- to C-terminus: uncharacterized protein (234 aa).

Disordered stretches follow at residues 1 to 65 (MTSV…RRGP) and 182 to 234 (ARGA…GRKT).

This is an uncharacterized protein from Homo sapiens (Human).